Reading from the N-terminus, the 158-residue chain is Large ribosomal subunit protein uL11 (158 aa).

It belongs to the universal ribosomal protein uL11 family. In terms of assembly, part of the ribosomal stalk of the 50S ribosomal subunit. Interacts with L10 and the large rRNA to form the base of the stalk. L10 forms an elongated spine to which L12 dimers bind in a sequential fashion forming a multimeric L10(L12)X complex.

Functionally, forms part of the ribosomal stalk which helps the ribosome interact with GTP-bound translation factors. The protein is Large ribosomal subunit protein uL11 of Methanosphaerula palustris (strain ATCC BAA-1556 / DSM 19958 / E1-9c).